Here is a 311-residue protein sequence, read N- to C-terminus: Methionyl-tRNA formyltransferase (311 aa).

Position 110–113 (110–113) interacts with (6S)-5,6,7,8-tetrahydrofolate; it reads SLLP.

Belongs to the Fmt family.

It catalyses the reaction L-methionyl-tRNA(fMet) + (6R)-10-formyltetrahydrofolate = N-formyl-L-methionyl-tRNA(fMet) + (6S)-5,6,7,8-tetrahydrofolate + H(+). Attaches a formyl group to the free amino group of methionyl-tRNA(fMet). The formyl group appears to play a dual role in the initiator identity of N-formylmethionyl-tRNA by promoting its recognition by IF2 and preventing the misappropriation of this tRNA by the elongation apparatus. This chain is Methionyl-tRNA formyltransferase, found in Streptococcus pyogenes serotype M28 (strain MGAS6180).